Reading from the N-terminus, the 262-residue chain is Serine/arginine-rich SC35-like splicing factor SCL30 (262 aa).

Low complexity predominate over residues 1 to 14 (MRRYSPPYYSPPRR). Disordered stretches follow at residues 1–48 (MRRY…SHGS) and 123–262 (ASES…VSPR). A phosphoserine mark is found at S5, S10, and S22. Over residues 31–42 (GYGGGGGGGGRR) the composition is skewed to gly residues. The 79-residue stretch at 47–125 (GSLLVRNIPL…REITVVVASE (79 aa)) folds into the RRM domain. Positions 125-152 (ESRKRPEEMRVKTRTRSREPSGSRDRSH) are enriched in basic and acidic residues. Residues 153–167 (GRSRSRSISRSRSPR) are compositionally biased toward basic residues. A phosphoserine mark is found at S182, S204, and S206. The residue at position 209 (Y209) is a Phosphotyrosine. A compositionally biased stretch (basic and acidic residues) spans 217–239 (PDRDRNGDNEIREKPGYEAEDRR). Residues 243-262 (RAVSRSPSGSRSRSVEVSPR) are compositionally biased toward low complexity. Phosphoserine is present on residues S254, S256, and S260.

The protein belongs to the splicing factor SR family. SCL subfamily. In terms of assembly, component of the spliceosome. Interacts with RS2Z33, CYP59, CYP63 and CYP95. In terms of processing, phosphorylated.

It is found in the nucleus speckle. Functionally, involved in intron recognition and spliceosome assembly. Probably active at the 5' splice sites. The chain is Serine/arginine-rich SC35-like splicing factor SCL30 (SCL30) from Arabidopsis thaliana (Mouse-ear cress).